A 133-amino-acid polypeptide reads, in one-letter code: Snaclec A9 (133 aa).

3 disulfides stabilise this stretch: Cys-4–Cys-15, Cys-32–Cys-131, and Cys-106–Cys-123. A C-type lectin domain is found at 11–132 (YEGHCYKVFN…CGQPYRFTCE (122 aa)).

It belongs to the snaclec family. As to quaternary structure, heterodimer; disulfide-linked. Expressed by the venom gland.

It localises to the secreted. Functionally, interferes with one step of hemostasis (modulation of platelet aggregation, or coagulation cascade, for example). The sequence is that of Snaclec A9 from Macrovipera lebetinus (Levantine viper).